A 126-amino-acid polypeptide reads, in one-letter code: MPEPSRSTPAPKKGSKKAITKAQKKDGKKRKRGRKESYSIYVYKVLKQVHPDTGISSKAMGIMNSFVNDIFERIASEASRLAHYNKRSTITSREVQTAVRLLLPGELAKHAVSEGTKAVTKYTSSK.

The tract at residues 1 to 35 (MPEPSRSTPAPKKGSKKAITKAQKKDGKKRKRGRK) is disordered. N-acetylproline is present on proline 2. At glutamate 3 the chain carries ADP-ribosyl glutamic acid. Serine 7 is modified (ADP-ribosylserine). Lysine 12 is modified (N6-(beta-hydroxybutyryl)lysine; alternate). 2 positions are modified to N6-acetyllysine; alternate: lysine 12 and lysine 13. N6-crotonyllysine; alternate occurs at positions 12 and 13. Lysine 12 is modified (N6-lactoyllysine; alternate). N6-(2-hydroxyisobutyryl)lysine; alternate is present on lysine 13. Residue serine 15 is modified to Phosphoserine; by STK4/MST1. An N6-acetyllysine; alternate mark is found at lysine 16, lysine 17, lysine 21, and lysine 24. Residues lysine 16, lysine 17, lysine 21, and lysine 24 each carry the N6-crotonyllysine; alternate modification. Residues lysine 16, lysine 17, lysine 21, and lysine 24 each carry the N6-lactoyllysine; alternate modification. N6-glutaryllysine; alternate is present on lysine 17. Lysine 21 carries the N6-(beta-hydroxybutyryl)lysine; alternate modification. Lysine 21 and lysine 24 each carry N6-(2-hydroxyisobutyryl)lysine; alternate. Position 21 is an N6-butyryllysine; alternate (lysine 21). A Glycyl lysine isopeptide (Lys-Gly) (interchain with G-Cter in SUMO2); alternate cross-link involves residue lysine 21. An N6-(2-hydroxyisobutyryl)lysine modification is found at lysine 25. Lysine 35 carries the post-translational modification N6-(beta-hydroxybutyryl)lysine; alternate. The residue at position 35 (lysine 35) is an N6-crotonyllysine; alternate. Position 35 is an N6-(2-hydroxyisobutyryl)lysine; alternate (lysine 35). At lysine 35 the chain carries N6-glutaryllysine; alternate. Lysine 35 is modified (N6-succinyllysine; alternate). A Glycyl lysine isopeptide (Lys-Gly) (interchain with G-Cter in ubiquitin); alternate cross-link involves residue lysine 35. Glutamate 36 bears the PolyADP-ribosyl glutamic acid mark. Serine 37 is modified (phosphoserine; by AMPK). The residue at position 44 (lysine 44) is an N6-lactoyllysine; alternate. Lysine 44, lysine 47, and lysine 58 each carry N6-(2-hydroxyisobutyryl)lysine; alternate. 2 positions are modified to N6-glutaryllysine; alternate: lysine 44 and lysine 47. N6-methyllysine; alternate is present on lysine 47. Residue lysine 58 is modified to N6,N6-dimethyllysine; alternate. Residue arginine 80 is modified to Dimethylated arginine. Lysine 86 is subject to N6-acetyllysine; alternate. An N6-lactoyllysine; alternate modification is found at lysine 86. Lysine 86 bears the N6-(2-hydroxyisobutyryl)lysine; alternate mark. Lysine 86 carries the N6,N6,N6-trimethyllysine; alternate modification. Residues arginine 87 and arginine 93 each carry the omega-N-methylarginine modification. N6-(beta-hydroxybutyryl)lysine; alternate is present on lysine 109. An N6-lactoyllysine; alternate modification is found at lysine 109. Lysine 109 is subject to N6-(2-hydroxyisobutyryl)lysine; alternate. An N6-glutaryllysine; alternate modification is found at lysine 109. Position 109 is an N6-methyllysine; alternate (lysine 109). Serine 113 is a glycosylation site (O-linked (GlcNAc) serine). At threonine 116 the chain carries Phosphothreonine. Residue lysine 117 is modified to N6-(beta-hydroxybutyryl)lysine; alternate. An N6-lactoyllysine; alternate mark is found at lysine 117 and lysine 121. N6-(2-hydroxyisobutyryl)lysine; alternate occurs at positions 117 and 121. Residues lysine 117 and lysine 121 each carry the N6-glutaryllysine; alternate modification. N6-succinyllysine; alternate occurs at positions 117 and 121. Position 117 is an N6-methylated lysine; alternate (lysine 117). A Glycyl lysine isopeptide (Lys-Gly) (interchain with G-Cter in ubiquitin); alternate cross-link involves residue lysine 121.

This sequence belongs to the histone H2B family. In terms of assembly, the nucleosome is a histone octamer containing two molecules each of H2A, H2B, H3 and H4 assembled in one H3-H4 heterotetramer and two H2A-H2B heterodimers. The octamer wraps approximately 147 bp of DNA. In terms of processing, monoubiquitination at Lys-35 (H2BK34Ub) by the MSL1/MSL2 dimer is required for histone H3 'Lys-4' (H3K4me) and 'Lys-79' (H3K79me) methylation and transcription activation at specific gene loci, such as HOXA9 and MEIS1 loci. Similarly, monoubiquitination at Lys-121 (H2BK120Ub) by the RNF20/40 complex gives a specific tag for epigenetic transcriptional activation and is also prerequisite for histone H3 'Lys-4' and 'Lys-79' methylation. It also functions cooperatively with the FACT dimer to stimulate elongation by RNA polymerase II. H2BK120Ub also acts as a regulator of mRNA splicing: deubiquitination by USP49 is required for efficient cotranscriptional splicing of a large set of exons. Post-translationally, phosphorylated on Ser-15 (H2BS14ph) by STK4/MST1 during apoptosis; which facilitates apoptotic chromatin condensation. Also phosphorylated on Ser-15 in response to DNA double strand breaks (DSBs), and in correlation with somatic hypermutation and immunoglobulin class-switch recombination. Phosphorylation at Ser-37 (H2BS36ph) by AMPK in response to stress promotes transcription. GlcNAcylation at Ser-113 promotes monoubiquitination of Lys-121. It fluctuates in response to extracellular glucose, and associates with transcribed genes. In terms of processing, ADP-ribosylated by PARP1 or PARP2 on Ser-7 (H2BS6ADPr) in response to DNA damage. H2BS6ADPr promotes recruitment of CHD1L. Mono-ADP-ribosylated on Glu-3 (H2BE2ADPr) by PARP3 in response to single-strand breaks. Poly ADP-ribosylation on Glu-36 (H2BE35ADPr) by PARP1 regulates adipogenesis: it inhibits phosphorylation at Ser-37 (H2BS36ph), thereby blocking expression of pro-adipogenetic genes. Post-translationally, crotonylation (Kcr) is specifically present in male germ cells and marks testis-specific genes in post-meiotic cells, including X-linked genes that escape sex chromosome inactivation in haploid cells. Crotonylation marks active promoters and enhancers and confers resistance to transcriptional repressors. It is also associated with post-meiotically activated genes on autosomes. Hydroxybutyrylation of histones is induced by starvation. In terms of processing, lactylated in macrophages by EP300/P300 by using lactoyl-CoA directly derived from endogenous or exogenous lactate, leading to stimulates gene transcription.

It localises to the nucleus. Its subcellular location is the chromosome. In terms of biological role, core component of nucleosome. Nucleosomes wrap and compact DNA into chromatin, limiting DNA accessibility to the cellular machineries which require DNA as a template. Histones thereby play a central role in transcription regulation, DNA repair, DNA replication and chromosomal stability. DNA accessibility is regulated via a complex set of post-translational modifications of histones, also called histone code, and nucleosome remodeling. The sequence is that of H2B.U histone 2 from Mus musculus (Mouse).